Consider the following 348-residue polypeptide: Phenylalanine--tRNA ligase alpha subunit (348 aa).

Glu-262 serves as a coordination point for Mg(2+).

Belongs to the class-II aminoacyl-tRNA synthetase family. Phe-tRNA synthetase alpha subunit type 1 subfamily. As to quaternary structure, tetramer of two alpha and two beta subunits. The cofactor is Mg(2+).

The protein localises to the cytoplasm. The catalysed reaction is tRNA(Phe) + L-phenylalanine + ATP = L-phenylalanyl-tRNA(Phe) + AMP + diphosphate + H(+). The polypeptide is Phenylalanine--tRNA ligase alpha subunit (Streptococcus pneumoniae serotype 2 (strain D39 / NCTC 7466)).